A 370-amino-acid chain; its full sequence is Trans-enoyl reductase xenG (370 aa).

The tract at residues 1 to 32 (MASTGLPQLPPSQKAVIQSEKTPGAFEVSENR) is disordered. Residues 54 to 57 (CDWK), 177 to 180 (STAS), 200 to 203 (SPKN), Tyr-218, 265 to 266 (FE), and 356 to 357 (VS) contribute to the NADP(+) site.

It belongs to the zinc-containing alcohol dehydrogenase family. In terms of assembly, monomer.

Its pathway is mycotoxin biosynthesis. In terms of biological role, trans-enoyl reductase; part of the gene cluster that mediates the biosynthesis of xenoacremones such as xenoacremone A, a compound that shows inhibitory activity toward the PI3K/AKT signaling pathway and which has the ability to induce apoptosis of A549 lung cancer cells. Within the pathway, cooperation of the hybrid PKS-NRPS xenE and the trans-acting enoyl reductase xenG is responsible for the formation of the reduced tyrosine-nonaketide derivative. The alpha/beta hydrolase xenA then accelerates intramolecular nucleophilic attack to give a pyrrolidone derivative. Subsequently, three enzymes, xenF, xenD, and xenC, coordinately participate in the conversion to xenoacremone B. XenF catalyzes sigmatropic rearrangement to form an A-ring, which leads to an unusual intermediate with a hexane ring, which is required for the formation of the tricarbocyclic product. Epoxidation catalyzed by xenD and the formation of the paracyclophane ether catalyzed by xenC initiate a spontaneous intramolecular Diels-Alder (IMDA) reaction to yield xenoacremone B. Spontaneous hydration of xenoacremone B leads to the formation of xenoacremone A, which undergoes subsequent methylation to afford xenoacremone C. The chain is Trans-enoyl reductase xenG from Xenoacremonium sinensis (Endophyte fungus).